The sequence spans 274 residues: MEMDIQESLLRLLRPLGLQRAEALAGALAREAGASKGLHDSQVLARAHALSVAPVEGRLGDLVWQVRQREHDGAPQVDLRWGLHRLGLDAPSRASTRDLVRAYERRLADRNEPMVYSTLAERVAGSMAEHTSLFQGMAMAVEEARARRSDANRLRENAPWQGWLVGASRAGHEAALLACIGMGADARLPDASGNTPLHHAARFGHFSLVTPLVEAGADVAALNAHGWAPLHLAALHKHARACLHLMAHGANPEQPGWRGRTPTRMHRHEQTQAL.

ANK repeat units follow at residues 192-221 (SGNTPLHHAARFGHFSLVTPLVEAGADVAA) and 225-254 (HGWAPLHLAALHKHARACLHLMAHGANPEQ). Residues 251 to 274 (NPEQPGWRGRTPTRMHRHEQTQAL) form a disordered region.

As to quaternary structure, exists as a dimer as well as a higher order oligomer.

Its subcellular location is the secreted. The protein resides in the periplasm. Its function is as follows. Directly binds F-actin, which results in thickened and distorted F-actin fibers, and affects cellular F-actin localization. Thus, may be a host effector whose function is to disrupt host actin cytoskeletal structure, which may enhance invasion. In Stenotrophomonas maltophilia (strain K279a), this protein is Actin-binding protein Smlt3054.